The primary structure comprises 347 residues: Holliday junction branch migration complex subunit RuvB (347 aa).

The segment at 1–185 (MSDDPTTPEL…FGFTAHLEFY (185 aa)) is large ATPase domain (RuvB-L). ATP contacts are provided by residues Leu-24, Arg-25, Gly-66, Lys-69, Thr-70, Thr-71, 132–134 (EDF), Arg-175, Tyr-185, and Arg-222. Residue Thr-70 coordinates Mg(2+). Positions 186–255 (DEGELAQVLA…AVHAALELYD (70 aa)) are small ATPAse domain (RuvB-S). The segment at 258–347 (ELGLDRLDRA…SQPPSLMDDL (90 aa)) is head domain (RuvB-H). Residues Arg-313 and Arg-318 each coordinate DNA.

This sequence belongs to the RuvB family. As to quaternary structure, homohexamer. Forms an RuvA(8)-RuvB(12)-Holliday junction (HJ) complex. HJ DNA is sandwiched between 2 RuvA tetramers; dsDNA enters through RuvA and exits via RuvB. An RuvB hexamer assembles on each DNA strand where it exits the tetramer. Each RuvB hexamer is contacted by two RuvA subunits (via domain III) on 2 adjacent RuvB subunits; this complex drives branch migration. In the full resolvosome a probable DNA-RuvA(4)-RuvB(12)-RuvC(2) complex forms which resolves the HJ.

The protein localises to the cytoplasm. It carries out the reaction ATP + H2O = ADP + phosphate + H(+). Functionally, the RuvA-RuvB-RuvC complex processes Holliday junction (HJ) DNA during genetic recombination and DNA repair, while the RuvA-RuvB complex plays an important role in the rescue of blocked DNA replication forks via replication fork reversal (RFR). RuvA specifically binds to HJ cruciform DNA, conferring on it an open structure. The RuvB hexamer acts as an ATP-dependent pump, pulling dsDNA into and through the RuvAB complex. RuvB forms 2 homohexamers on either side of HJ DNA bound by 1 or 2 RuvA tetramers; 4 subunits per hexamer contact DNA at a time. Coordinated motions by a converter formed by DNA-disengaged RuvB subunits stimulates ATP hydrolysis and nucleotide exchange. Immobilization of the converter enables RuvB to convert the ATP-contained energy into a lever motion, pulling 2 nucleotides of DNA out of the RuvA tetramer per ATP hydrolyzed, thus driving DNA branch migration. The RuvB motors rotate together with the DNA substrate, which together with the progressing nucleotide cycle form the mechanistic basis for DNA recombination by continuous HJ branch migration. Branch migration allows RuvC to scan DNA until it finds its consensus sequence, where it cleaves and resolves cruciform DNA. The polypeptide is Holliday junction branch migration complex subunit RuvB (Leifsonia xyli subsp. xyli (strain CTCB07)).